Reading from the N-terminus, the 279-residue chain is Fatty acid desaturase 4-like 2, chloroplastic (279 aa).

The N-terminal 30 residues, 1 to 30 (MATSLQTKYTLNPITNNIPRSHRPSFLRVT), are a transit peptide targeting the chloroplast. 3 helical membrane-spanning segments follow: residues 68–90 (LWVA…GAFG), 98–118 (SLAG…YHWA), and 178–198 (VVHG…LFHA).

It belongs to the fatty acid desaturase CarF family.

It localises to the plastid. The protein resides in the chloroplast membrane. The protein operates within lipid metabolism; fatty acid metabolism. Its function is as follows. Fatty acid desaturase involved in the production of chloroplast-specific phosphatidylglycerol molecular species. Catalyzes the formation of a trans double bond introduced close to the carboxyl group of palmitic acid, which is specifically esterified to the sn-2 glyceryl carbon of phosphatidylglycerol. This chain is Fatty acid desaturase 4-like 2, chloroplastic (FAD4L2), found in Arabidopsis thaliana (Mouse-ear cress).